Reading from the N-terminus, the 224-residue chain is Heme response regulator HssR (224 aa).

The Response regulatory domain maps to 3–116 (QCLVVDDDPR…ELIFRIRAVL (114 aa)). Asp-52 bears the 4-aspartylphosphate mark. The ompR/PhoB-type DNA-binding region spans 124-222 (NSEMTIGNLT…VRGQGYKVEN (99 aa)).

In terms of processing, phosphorylated by HssS.

Its subcellular location is the cytoplasm. In terms of biological role, member of the two-component regulatory system HssS/HssR involved in intracellular heme homeostasis and tempering of staphylococcal virulence. Phosphorylated HssR binds to a direct repeat sequence within hrtAB promoter and activates the expression of hrtAB, an efflux pump, in response to extracellular heme, hemin, hemoglobin or blood. This Staphylococcus aureus (strain MRSA252) protein is Heme response regulator HssR (hssR).